The chain runs to 605 residues: Alpha-amylase (605 aa).

Positions 1 to 33 (MGVRRSLAALLAALLGCATSLVALTVAASPAHA) are cleaved as a signal peptide. 2 residues coordinate Ca(2+): N130 and D189. D219 acts as the Nucleophile in catalysis. Position 223 (H223) interacts with Ca(2+). The active-site Proton donor is E253. The CBM20 domain maps to 500-605 (GDDCTTVTAR…CSQNFYDSWR (106 aa)).

The protein belongs to the glycosyl hydrolase 13 family. Monomer. The cofactor is Ca(2+).

It catalyses the reaction Endohydrolysis of (1-&gt;4)-alpha-D-glucosidic linkages in polysaccharides containing three or more (1-&gt;4)-alpha-linked D-glucose units.. The chain is Alpha-amylase (tam) from Thermomonospora curvata.